The following is a 213-amino-acid chain: Validoxylamine A 7'-phosphate phosphatase (213 aa).

Residue aspartate 8 is the Nucleophile of the active site. A divalent metal cation contacts are provided by aspartate 8 and aspartate 10. Residues 8–10 (DLD), 107–108 (TS), and lysine 140 each bind substrate. Aspartate 10 serves as the catalytic Proton donor. Aspartate 165 lines the a divalent metal cation pocket.

The protein belongs to the HAD-like hydrolase superfamily. CbbY/CbbZ/Gph/YieH family. Mg(2+) serves as cofactor. Mn(2+) is required as a cofactor. Requires Co(2+) as cofactor.

The catalysed reaction is validoxylamine A 7'-phosphate + H2O = validoxylamine A + phosphate. Its function is as follows. Involved in the biosynthesis of the antifungal agent validamycin A. Catalyzes the dephosphorylation of validoxylamine A 7'-phosphate to yield validoxylamine A. VldH is also able to convert trehalose 6-phosphate to trehalose. The chain is Validoxylamine A 7'-phosphate phosphatase from Streptomyces hygroscopicus subsp. limoneus.